Consider the following 414-residue polypeptide: 2,3-bisphosphoglycerate-independent phosphoglycerate mutase (414 aa).

The protein belongs to the BPG-independent phosphoglycerate mutase family. A-PGAM subfamily.

It catalyses the reaction (2R)-2-phosphoglycerate = (2R)-3-phosphoglycerate. It participates in carbohydrate degradation; glycolysis; pyruvate from D-glyceraldehyde 3-phosphate: step 3/5. Functionally, catalyzes the interconversion of 2-phosphoglycerate and 3-phosphoglycerate. The chain is 2,3-bisphosphoglycerate-independent phosphoglycerate mutase from Saccharolobus solfataricus (strain ATCC 35092 / DSM 1617 / JCM 11322 / P2) (Sulfolobus solfataricus).